The following is a 505-amino-acid chain: UDP-N-acetylmuramate--L-alanine ligase (505 aa).

ATP is bound at residue 164 to 170 (GTHGKTT).

Belongs to the MurCDEF family.

The protein resides in the cytoplasm. The catalysed reaction is UDP-N-acetyl-alpha-D-muramate + L-alanine + ATP = UDP-N-acetyl-alpha-D-muramoyl-L-alanine + ADP + phosphate + H(+). Its pathway is cell wall biogenesis; peptidoglycan biosynthesis. Cell wall formation. The sequence is that of UDP-N-acetylmuramate--L-alanine ligase from Synechocystis sp. (strain ATCC 27184 / PCC 6803 / Kazusa).